We begin with the raw amino-acid sequence, 89 residues long: Small ribosomal subunit protein uS14 (89 aa).

A disordered region spans residues 32–51 (DYEGLQKLPKNSSPVRLHNR).

It belongs to the universal ribosomal protein uS14 family. In terms of assembly, part of the 30S ribosomal subunit. Contacts proteins S3 and S10.

Functionally, binds 16S rRNA, required for the assembly of 30S particles and may also be responsible for determining the conformation of the 16S rRNA at the A site. The protein is Small ribosomal subunit protein uS14 of Christiangramia forsetii (strain DSM 17595 / CGMCC 1.15422 / KT0803) (Gramella forsetii).